Consider the following 227-residue polypeptide: Glutathione S-transferase U27 (227 aa).

In terms of domain architecture, GST N-terminal spans 4 to 84 (EEVVVLNFWP…YIDEVWKDDK (81 aa)). Glutathione-binding positions include 14–15 (SM), 41–42 (QK), 55–56 (KI), and 68–69 (ES). Residues 92–217 (DPYQKSQCRF…LKIFDRVTQI (126 aa)) form the GST C-terminal domain.

Belongs to the GST superfamily. Tau family.

Its subcellular location is the cytoplasm. The protein resides in the cytosol. It catalyses the reaction RX + glutathione = an S-substituted glutathione + a halide anion + H(+). In terms of biological role, may be involved in the conjugation of reduced glutathione to a wide number of exogenous and endogenous hydrophobic electrophiles and have a detoxification role against certain herbicides. This chain is Glutathione S-transferase U27 (GSTU27), found in Arabidopsis thaliana (Mouse-ear cress).